A 754-amino-acid chain; its full sequence is Putative sulfate transporter YPR003C (754 aa).

Residues 1 to 91 (MTSNNSLLGR…NTSNTNNNDS (91 aa)) form a disordered region. Residues 1-118 (MTSNNSLLGR…SWLPEYTFNK (118 aa)) are Cytoplasmic-facing. Residues 25–45 (RSVDQRDTFSDNFDYDKDSSN) show a composition bias toward basic and acidic residues. The segment covering 65–89 (NSRSGCTNNTNNTNNTSNTSNTNNN) has biased composition (low complexity). Residues 119-139 (LWGDVIAGISVASFQIPLALS) traverse the membrane as a helical segment. The Lumenal segment spans residues 140–146 (YTTSIAH). A helical membrane pass occupies residues 147-167 (VPPLCGLYSLAISPFVYGILG). The Cytoplasmic portion of the chain corresponds to 168–172 (SVPQM). The helical transmembrane segment at 173–193 (IVGPESAISLVVGQAVESITL) threads the bilayer. At 194–199 (HKENVS) the chain is on the lumenal side. Residues 200–220 (LIDISTVITFVSGTILLFSGI) traverse the membrane as a helical segment. Residues 221–232 (SRFGFLGNVLSK) are Cytoplasmic-facing. Residues 233–253 (ALLRGFISSVGLVMIINSLIS) form a helical membrane-spanning segment. Over 254-282 (ELKLDKFLVSLPQHYHTPFEKILFLIDYA) the chain is Lumenal. The helical transmembrane segment at 283-303 (PAQYHIPTAIFSGCCLIVLFL) threads the bilayer. Over 304-317 (TRLLKRKLMKYHKS) the chain is Cytoplasmic. Residues 318–338 (AIFFPDILLVVIVTILISMKF) traverse the membrane as a helical segment. The Lumenal segment spans residues 339–370 (NLKHRYGISIIGDFSMDNFDELKNPLTRPRRK). The chain crosses the membrane as a helical span at residues 371-391 (LIPDLFSASLIVAMLGFFEST). Residues 392–410 (TASKSLGTTYNLTVSSNRE) lie on the Cytoplasmic side of the membrane. The helical transmembrane segment at 411–431 (LVALGFMNIVISLFGALPAFG) threads the bilayer. Over 432–450 (GYGRSKINALSGAQSVMSG) the chain is Lumenal. A helical transmembrane segment spans residues 451-471 (VFMGVITLITMNLLLQFVHYI). Residues 472-474 (PNC) lie on the Cytoplasmic side of the membrane. The chain crosses the membrane as a helical span at residues 475–495 (VLSVITTIIGISLLEEVPGDI). The Lumenal segment spans residues 496-517 (KFHLRCGGFSELFVFAVTFCTT). A helical transmembrane segment spans residues 518 to 538 (IFYSIEAGICIGCVYSIINII). At 539 to 754 (KHSAKSRIQI…SNTLFNSSLV (216 aa)) the chain is on the cytoplasmic side. The 152-residue stretch at 574-725 (DVEGTEEIEG…DSIDAALYEI (152 aa)) folds into the STAS domain.

Belongs to the SLC26A/SulP transporter (TC 2.A.53) family.

Its subcellular location is the endoplasmic reticulum membrane. Its function is as follows. Possible sulfate transporter. In Saccharomyces cerevisiae (strain ATCC 204508 / S288c) (Baker's yeast), this protein is Putative sulfate transporter YPR003C.